Consider the following 449-residue polypeptide: Na(+)/H(+) antiporter NhaA (449 aa).

12 helical membrane passes run 30–50 (IFLI…WAGA), 69–89 (FGLT…FLVA), 112–132 (LLAA…LNLG), 138–158 (GWGI…GLLG), 168–188 (FLIA…ALFY), 192–212 (LSWI…LMNW), 218–238 (LIWY…SGIH), 241–261 (IAGV…SKIL), 312–332 (SLVD…NAGV), 348–368 (LGIL…FTLI), 386–406 (IIGI…ITNL), and 419–439 (ISIL…LLLT).

This sequence belongs to the NhaA Na(+)/H(+) (TC 2.A.33) antiporter family.

The protein localises to the cell inner membrane. It catalyses the reaction Na(+)(in) + 2 H(+)(out) = Na(+)(out) + 2 H(+)(in). In terms of biological role, na(+)/H(+) antiporter that extrudes sodium in exchange for external protons. The chain is Na(+)/H(+) antiporter NhaA from Christiangramia forsetii (strain DSM 17595 / CGMCC 1.15422 / KT0803) (Gramella forsetii).